The primary structure comprises 258 residues: Probable S-methyl-5'-thioinosine phosphorylase (258 aa).

53–54 (RH) contributes to the phosphate binding site. M180 lines the substrate pocket. T181 is a phosphate binding site. A substrate-binding site is contributed by 204 to 206 (NQA).

It belongs to the PNP/MTAP phosphorylase family. MTAP subfamily. In terms of assembly, homotrimer.

The catalysed reaction is S-methyl-5'-thioinosine + phosphate = 5-(methylsulfanyl)-alpha-D-ribose 1-phosphate + hypoxanthine. It functions in the pathway purine metabolism; purine nucleoside salvage. Catalyzes the reversible phosphorylation of S-methyl-5'-thioinosine (MTI) to hypoxanthine and 5-methylthioribose-1-phosphate. Involved in the breakdown of S-methyl-5'-thioadenosine (MTA), a major by-product of polyamine biosynthesis. Catabolism of (MTA) occurs via deamination to MTI and phosphorolysis to hypoxanthine. This Methanosarcina acetivorans (strain ATCC 35395 / DSM 2834 / JCM 12185 / C2A) protein is Probable S-methyl-5'-thioinosine phosphorylase.